Reading from the N-terminus, the 104-residue chain is ATP-dependent Clp protease adapter protein ClpS (104 aa).

This sequence belongs to the ClpS family. In terms of assembly, binds to the N-terminal domain of the chaperone ClpA.

Involved in the modulation of the specificity of the ClpAP-mediated ATP-dependent protein degradation. The polypeptide is ATP-dependent Clp protease adapter protein ClpS (Burkholderia ambifaria (strain MC40-6)).